The chain runs to 230 residues: E3 ubiquitin-protein ligase RNF114 (230 aa).

The RING-type zinc-finger motif lies at Cys31–Arg70. Zn(2+) contacts are provided by Cys93 and Cys96. Residues Cys93–Cys112 form a C2HC RNF-type zinc finger. The residue at position 104 (Lys104) is an N6-acetyllysine. The Zn(2+) site is built by His108 and Cys112. Lys114 carries the N6-acetyllysine modification.

Interacts with XAF1, the interaction increases XAF1 stability and proapoptotic effects, and may regulate IFN signaling. In terms of processing, autoubiquitinated. Polyubiquitinated in the presence of E2 enzymes UBE2D1, UBE2D2 and UBE2D3, but only monoubiquitinated in the presence of UBE2E1.

The protein resides in the cytoplasm. The protein localises to the nucleus. It carries out the reaction S-ubiquitinyl-[E2 ubiquitin-conjugating enzyme]-L-cysteine + [acceptor protein]-L-lysine = [E2 ubiquitin-conjugating enzyme]-L-cysteine + N(6)-ubiquitinyl-[acceptor protein]-L-lysine.. It participates in protein modification; protein ubiquitination. In terms of biological role, E3 ubiquitin-protein ligase that promotes the ubiquitination of various substrates. In turn, participates in the regulation of many biological processes including cell cycle, apoptosis, osteoclastogenesis as well as innate or adaptive immunity. Acts as negative regulator of NF-kappa-B-dependent transcription by promoting the ubiquitination and stabilization of the NF-kappa-B inhibitor TNFAIP3. May promote the ubiquitination of TRAF6 as well. Also acts as a negative regulator of T-cell activation. Inhibits cellular dsRNA responses and interferon production by targeting MAVS component for proteasomal degradation. Ubiquitinates the CDK inhibitor CDKN1A leading to its degradationand probably also CDKN1B and CDKN1C. This activity stimulates cell cycle G1-to-S phase transition and suppresses cellular senescence. May play a role in spermatogenesis. This Bos taurus (Bovine) protein is E3 ubiquitin-protein ligase RNF114 (RNF114).